The following is a 504-amino-acid chain: ATP synthase subunit beta (504 aa).

181-188 (GGAGVGKT) lines the ATP pocket.

It belongs to the ATPase alpha/beta chains family. F-type ATPases have 2 components, CF(1) - the catalytic core - and CF(0) - the membrane proton channel. CF(1) has five subunits: alpha(3), beta(3), gamma(1), delta(1), epsilon(1). CF(0) has three main subunits: a(1), b(2) and c(9-12). The alpha and beta chains form an alternating ring which encloses part of the gamma chain. CF(1) is attached to CF(0) by a central stalk formed by the gamma and epsilon chains, while a peripheral stalk is formed by the delta and b chains.

It localises to the cell inner membrane. It catalyses the reaction ATP + H2O + 4 H(+)(in) = ADP + phosphate + 5 H(+)(out). Its function is as follows. Produces ATP from ADP in the presence of a proton gradient across the membrane. The catalytic sites are hosted primarily by the beta subunits. This chain is ATP synthase subunit beta, found in Ehrlichia ruminantium (strain Welgevonden).